The primary structure comprises 114 residues: uncharacterized protein (114 aa).

A lipid anchor (N-myristoyl glycine; by host) is attached at Gly2. 2 helical membrane-spanning segments follow: residues 11-31 (FGLI…KDLL) and 44-64 (GLMW…LVAI). The interval 73–114 (VNKDSKDPKDKSIEFDDSPIRDGSSGTPDNSNEPTDLSVETS) is disordered. The span at 75–92 (KDSKDPKDKSIEFDDSPI) shows a compositional bias: basic and acidic residues. Over residues 96-114 (SSGTPDNSNEPTDLSVETS) the composition is skewed to polar residues.

The protein localises to the membrane. This is an uncharacterized protein from Acanthamoeba polyphaga (Amoeba).